The chain runs to 248 residues: Metallo-beta-lactamase type 2 (248 aa).

The first 21 residues, 1–21 (MKGLKGLLVLALGFTGLQVFG), serve as a signal peptide directing secretion. Residues histidine 97, histidine 99, aspartate 101, histidine 160, and cysteine 179 each coordinate Zn(2+). Lysine 182 lines the substrate pocket. Position 221 (histidine 221) interacts with Zn(2+).

The protein belongs to the metallo-beta-lactamase superfamily. Class-B beta-lactamase family. As to quaternary structure, monomer. Requires Zn(2+) as cofactor.

Its subcellular location is the periplasm. It catalyses the reaction a beta-lactam + H2O = a substituted beta-amino acid. In terms of biological role, confers resistance to the different beta-lactams antibiotics (penicillin, cephalosporin and carbapenem) via the hydrolysis of the beta-lactam ring. The chain is Metallo-beta-lactamase type 2 (blaB7) from Elizabethkingia meningoseptica (Chryseobacterium meningosepticum).